We begin with the raw amino-acid sequence, 143 residues long: Putative pre-16S rRNA nuclease (143 aa).

Belongs to the YqgF nuclease family.

Its subcellular location is the cytoplasm. Functionally, could be a nuclease involved in processing of the 5'-end of pre-16S rRNA. In Mycoplasma capricolum subsp. capricolum (strain California kid / ATCC 27343 / NCTC 10154), this protein is Putative pre-16S rRNA nuclease.